The following is a 64-amino-acid chain: Conotoxin Mr3.5 (64 aa).

The first 19 residues, 1–19, serve as a signal peptide directing secretion; that stretch reads MSKLGVLLTICLLLFPLTA. A propeptide spanning residues 20–46 is cleaved from the precursor; the sequence is LPLDGDQPADQRAERTQAEKHSLPDPR. 3 disulfide bridges follow: Cys49-Cys58, Cys50-Cys62, and Cys54-Cys63. The residue at position 63 (Cys63) is a Cysteine amide.

The protein belongs to the conotoxin M superfamily. In terms of tissue distribution, expressed by the venom duct.

The protein localises to the secreted. The sequence is that of Conotoxin Mr3.5 from Conus marmoreus (Marble cone).